The primary structure comprises 185 residues: Ribosome-recycling factor (185 aa).

It belongs to the RRF family.

The protein localises to the cytoplasm. Its function is as follows. Responsible for the release of ribosomes from messenger RNA at the termination of protein biosynthesis. May increase the efficiency of translation by recycling ribosomes from one round of translation to another. The protein is Ribosome-recycling factor of Macrococcus caseolyticus (strain JCSC5402) (Macrococcoides caseolyticum).